Reading from the N-terminus, the 330-residue chain is Reaction center protein M chain (330 aa).

3 helical membrane passes run 57 to 83, 115 to 144, and 147 to 172; these read GWTS…AQVG, GGWY…EQHK, and KHIF…ILMG. The (7R,8Z)-bacteriochlorophyll b site is built by H185 and H205. A helical membrane pass occupies residues 202-230; that stretch reads NPFHCLSIVFLYGSVLLFCMHGGTILAVT. Residues H222 and E237 each coordinate Fe cation. Position 255 (W255) interacts with a ubiquinone. Residues 264 to 290 traverse the membrane as a helical segment; the sequence is TMEGIHRWAWWFAVLTPITGGIGILLT. H269 is a Fe cation binding site.

It belongs to the reaction center PufL/M/PsbA/D family. Reaction center is composed of four bacteriochlorophylls, two bacteriopheophytins, two ubiquinones, one iron, and two highly hydrophobic polypeptide chains (designated L and M).

It is found in the cellular chromatophore membrane. Its function is as follows. The reaction center is a membrane-bound complex that mediates the initial photochemical event in the electron transfer process of photosynthesis. The protein is Reaction center protein M chain (pufM) of Roseobacter denitrificans (strain ATCC 33942 / OCh 114) (Erythrobacter sp. (strain OCh 114)).